Here is a 549-residue protein sequence, read N- to C-terminus: MKNINPTQTAAWQALQKHFDEMKDVTIADLFAKDGDRFSKFSATFDDQMLVDYSKNRITEETLAKLQDLAKECDLAGAIKSMFSGEKINRTENRAVLHVALRNRSNTPILVDGKDVMPEVNAVLEKMKTFSEAIISGEWKGYTGKAITDVVNIGIGGSDLGPYMVTEALRPYKNHLNMHFVSNVDGTHIAEVLKKVNPETTLFLVASKTFTTQETMTNAHSARDWFLKAAGDEKHVAKHFAALSTNAKAVGEFGIDTANMFEFWDWVGGRYSLWSAIGLSIVLSIGFDNFVELLSGAHAMDKHFSTTPAEKNLPVLLALIGIWYNNFFGAETEAILPYDQYMHRFAAYFQQGNMESNGKYVDRNGNVVDYQTGPIIWGEPGTNGQHAFYQLIHQGTKMVPCDFIAPAITHNPLSDHHQKLLSNFFAQTEALAFGKSREVVEQEYRDQGKDPATLDYVVPFKVFEGNRPTNSILLREITPFSLGALIALYEHKIFTQGVILNIFTFDQWGVELGKQLANRILPELKDDKEISSHDSSTNGLINRYKAWRG.

An N6-acetyllysine mark is found at lysine 80, lysine 228, and lysine 234. The active-site Proton donor is the glutamate 355. Catalysis depends on residues histidine 386 and lysine 514.

The protein belongs to the GPI family.

It is found in the cytoplasm. It catalyses the reaction alpha-D-glucose 6-phosphate = beta-D-fructose 6-phosphate. Its pathway is carbohydrate biosynthesis; gluconeogenesis. The protein operates within carbohydrate degradation; glycolysis; D-glyceraldehyde 3-phosphate and glycerone phosphate from D-glucose: step 2/4. In terms of biological role, catalyzes the reversible isomerization of glucose-6-phosphate to fructose-6-phosphate. This is Glucose-6-phosphate isomerase from Shigella boydii serotype 4 (strain Sb227).